We begin with the raw amino-acid sequence, 119 residues long: Non-specific lipid-transfer protein 11 (119 aa).

A signal peptide spans 1–28 (MRNITTTTRKMLLLVITILLGIAYHGEA). 4 disulfides stabilise this stretch: C31–C78, C41–C55, C56–C101, and C76–C115.

Belongs to the plant LTP family.

In terms of biological role, plant non-specific lipid-transfer proteins transfer phospholipids as well as galactolipids across membranes. May play a role in wax or cutin deposition in the cell walls of expanding epidermal cells and certain secretory tissues. This is Non-specific lipid-transfer protein 11 (LTP11) from Arabidopsis thaliana (Mouse-ear cress).